A 269-amino-acid polypeptide reads, in one-letter code: Sulfur carrier protein FdhD (269 aa).

Catalysis depends on Cys111, which acts as the Cysteine persulfide intermediate.

The protein belongs to the FdhD family.

The protein resides in the cytoplasm. In terms of biological role, required for formate dehydrogenase (FDH) activity. Acts as a sulfur carrier protein that transfers sulfur from IscS to the molybdenum cofactor prior to its insertion into FDH. In Brucella abortus biovar 1 (strain 9-941), this protein is Sulfur carrier protein FdhD.